A 287-amino-acid chain; its full sequence is HTH-type transcriptional regulator MurR (287 aa).

Residues 1 to 77 (MLYLAKMRNA…MALIEEHSVS (77 aa)) form the HTH rpiR-type domain. A DNA-binding region (H-T-H motif) is located at residues 37–56 (SRNMAKQLEISQSSIVKFAQ). The region spanning 128-268 (VINLISKAPL…FVGMVQLNDV (141 aa)) is the SIS domain.

As to quaternary structure, homotetramer.

Its pathway is amino-sugar metabolism; N-acetylmuramate degradation [regulation]. In terms of biological role, represses the expression of the murPQ operon involved in the uptake and degradation of N-acetylmuramic acid (MurNAc). Binds to two adjacent inverted repeats within the operator region. MurNAc 6-phosphate, the substrate of MurQ, is the specific inducer that weakens binding of MurR to the operator. This is HTH-type transcriptional regulator MurR from Salmonella arizonae (strain ATCC BAA-731 / CDC346-86 / RSK2980).